Reading from the N-terminus, the 577-residue chain is Hemagglutinin-neuraminidase (577 aa).

The Intravirion segment spans residues 1–22 (MDRAVSQVALENDEREAKNTWR). Residues 23 to 45 (LIFRIAILLLTVVTLATSVASLV) form a helical membrane-spanning segment. Residues 46-571 (YSMGASTPSD…LVEILKNDGV (526 aa)) are Virion surface-facing. 2 N-linked (GlcNAc...) asparagine; by host glycosylation sites follow: asparagine 119 and asparagine 144. The interval 124–152 (GAPIHDPDFIGGIGKELIVDNASDVTSFY) is important for interaction with fusion/F protein. Disulfide bonds link cysteine 172-cysteine 196, cysteine 186-cysteine 247, and cysteine 238-cysteine 251. The segment at 234-239 (NRKSCS) is involved in neuraminidase activity. Residues asparagine 341 and asparagine 433 are each glycosylated (N-linked (GlcNAc...) asparagine; by host). Cystine bridges form between cysteine 344/cysteine 461 and cysteine 455/cysteine 465. 2 N-linked (GlcNAc...) asparagine; by host glycosylation sites follow: asparagine 481 and asparagine 538. Cysteine 531 and cysteine 542 are oxidised to a cystine.

It belongs to the paramyxoviruses hemagglutinin-neuraminidase family. As to quaternary structure, homotetramer; composed of disulfide-linked homodimers. Interacts with F protein trimer. Interacts with host CG-1B; this interaction inhibits viral adsorption and replication rather than internalization.

The protein localises to the virion membrane. Its subcellular location is the host cell membrane. It carries out the reaction Hydrolysis of alpha-(2-&gt;3)-, alpha-(2-&gt;6)-, alpha-(2-&gt;8)- glycosidic linkages of terminal sialic acid residues in oligosaccharides, glycoproteins, glycolipids, colominic acid and synthetic substrates.. In terms of biological role, mediates the viral entry into the host cell together with fusion/F protein. Attaches the virus to sialic acid-containing cell receptors and thereby initiates infection. Binding of HN protein to the receptor induces a conformational change that allows the F protein to trigger virion/cell membranes fusion. Neuraminidase activity ensures the efficient spread of the virus by dissociating the mature virions from the neuraminic acid containing glycoproteins. This is Hemagglutinin-neuraminidase (HN) from Gallus gallus (Chicken).